We begin with the raw amino-acid sequence, 404 residues long: Pyruvate-flavodoxin oxidoreductase (404 aa).

The protein belongs to the pyruvate:ferredoxin/flavodoxin oxidoreductase family.

It catalyses the reaction oxidized [flavodoxin] + pyruvate + CoA + 2 H(+) = reduced [flavodoxin] + acetyl-CoA + CO2. Functionally, oxidoreductase required for the transfer of electrons from pyruvate to flavodoxin, which reduces nitrogenase. This Nostoc sp. (strain ATCC 29151 / PCC 7119) (Anabaena sp.) protein is Pyruvate-flavodoxin oxidoreductase (nifJ).